A 212-amino-acid polypeptide reads, in one-letter code: Thymidylate kinase (212 aa).

Residue 11–18 coordinates ATP; it reads GLEGAGKT.

It belongs to the thymidylate kinase family.

The enzyme catalyses dTMP + ATP = dTDP + ADP. Phosphorylation of dTMP to form dTDP in both de novo and salvage pathways of dTTP synthesis. The sequence is that of Thymidylate kinase from Buchnera aphidicola subsp. Schizaphis graminum (strain Sg).